Here is a 210-residue protein sequence, read N- to C-terminus: RNA chaperone ProQ (210 aa).

The interval 118–146 (KAAKPEKKRPARRVAAKGQHAKETTTNKA) is disordered. Over residues 123–132 (EKKRPARRVA) the composition is skewed to basic residues.

This sequence belongs to the ProQ family.

The protein resides in the cytoplasm. Functionally, RNA chaperone with significant RNA binding, RNA strand exchange and RNA duplexing activities. This Pasteurella multocida (strain Pm70) protein is RNA chaperone ProQ.